Reading from the N-terminus, the 78-residue chain is Probable cytochrome c oxidase subunit 6B (78 aa).

The region spanning 21-64 (TKHCWANYVDYYGCVKHYNGDNSKCQTFFNSMNSLCPAAWISEW) is the CHCH domain. Positions 24 to 34 (CWANYVDYYGC) match the Cx9C motif motif. Disulfide bonds link Cys24–Cys56 and Cys34–Cys45. The Cx10C motif signature appears at 45-56 (CQTFFNSMNSLC).

Belongs to the cytochrome c oxidase subunit 6B family. As to quaternary structure, component of the cytochrome c oxidase (complex IV, CIV), a multisubunit enzyme composed of a catalytic core of 3 subunits and several supernumerary subunits. The complex exists as a monomer or a dimer and forms supercomplexes (SCs) in the inner mitochondrial membrane with ubiquinol-cytochrome c oxidoreductase (cytochrome b-c1 complex, complex III, CIII).

It is found in the mitochondrion inner membrane. The protein operates within energy metabolism; oxidative phosphorylation. In terms of biological role, component of the cytochrome c oxidase, the last enzyme in the mitochondrial electron transport chain which drives oxidative phosphorylation. The respiratory chain contains 3 multisubunit complexes succinate dehydrogenase (complex II, CII), ubiquinol-cytochrome c oxidoreductase (cytochrome b-c1 complex, complex III, CIII) and cytochrome c oxidase (complex IV, CIV), that cooperate to transfer electrons derived from NADH and succinate to molecular oxygen, creating an electrochemical gradient over the inner membrane that drives transmembrane transport and the ATP synthase. Cytochrome c oxidase is the component of the respiratory chain that catalyzes the reduction of oxygen to water. Electrons originating from reduced cytochrome c in the intermembrane space (IMS) are transferred via the dinuclear copper A center (CU(A)) of subunit 2 and heme A of subunit 1 to the active site in subunit 1, a binuclear center (BNC) formed by heme A3 and copper B (CU(B)). The BNC reduces molecular oxygen to 2 water molecules using 4 electrons from cytochrome c in the IMS and 4 protons from the mitochondrial matrix. In Dictyostelium discoideum (Social amoeba), this protein is Probable cytochrome c oxidase subunit 6B.